The following is a 376-amino-acid chain: Beta-centractin (376 aa).

Residue Met1 is modified to N-acetylmethionine. At Tyr4 the chain carries 3'-nitrotyrosine.

This sequence belongs to the actin family. ARP1 subfamily.

It localises to the cytoplasm. Its subcellular location is the cytoskeleton. It is found in the microtubule organizing center. The protein resides in the centrosome. Its function is as follows. Component of a multi-subunit complex involved in microtubule based vesicle motility. It is associated with the centrosome. The chain is Beta-centractin (ACTR1B) from Homo sapiens (Human).